We begin with the raw amino-acid sequence, 545 residues long: Toxin BC_0920 (545 aa).

The LXG domain occupies 1–217 (MSLNMYLGEV…ARQAANSIEE (217 aa)).

This sequence in the N-terminal section; belongs to the LXG family. It in the C-terminal section; belongs to the bacterial EndoU family. Probably interacts with cognate immunity protein BC_0921. The interaction inhibits the toxic activity of BC_0921.

It localises to the secreted. Toxic component of an LXG toxin-immunity module. The C-terminus (residues 322-545) has RNase activity in E.coli which is neutralized by cognate immunity protein BC_0921, but not by immunity proteins specific to other toxins with the LXG domain. Degrades 5S rRNA and several tRNAs in vitro; cleavage is endonucleolytic within the anticodon loop for tRNA(GAU-Ile) and tRNA(UUC-Glu) but total for 5S rRNA and at least one other tRNA. RNase activity is suppressed by cognate immunity protein BC_0921. The polypeptide is Toxin BC_0920 (Bacillus cereus (strain ATCC 14579 / DSM 31 / CCUG 7414 / JCM 2152 / NBRC 15305 / NCIMB 9373 / NCTC 2599 / NRRL B-3711)).